Consider the following 182-residue polypeptide: ADP-ribosylation factor-like protein 3 (182 aa).

The N-myristoyl glycine moiety is linked to residue G2. At S5 the chain carries Phosphoserine. GTP-binding positions include 24-31, T48, 67-71, G70, 126-129, and 159-161; these read GLDNAGKT, DIGGQ, NKQD, and SAL. Residues T31 and T48 each coordinate Mg(2+).

This sequence belongs to the small GTPase superfamily. Arf family. In terms of assembly, found in a complex with ARL3, RP2 and UNC119 (or UNC119B); RP2 induces hydrolysis of GTP ARL3 in the complex, leading to the release of UNC119 (or UNC119B). Interacts with RP2; interaction is direct and stimulated with the activated GTP-bound form of ARL3. Interacts with SYS1. The GTP-bound form interacts with ARL2BP and PDE6D. Microtubule-associated protein. May interact with GOLGA4. Interacts with GGA1; the interaction recruits PKD1:PKD2 complex to trans-Golgi network and is required for ciliary targeting of PKD1:PKD2 complex. Interacts with DNAAF9. As to expression, expressed in the retina. Strongly expressed in connecting cilium, the myoid region of the inner segments (IS) and in cone photoreceptors (at protein level).

It is found in the golgi apparatus membrane. It localises to the cytoplasm. The protein localises to the cytoskeleton. Its subcellular location is the spindle. The protein resides in the nucleus. It is found in the microtubule organizing center. It localises to the centrosome. The protein localises to the cell projection. Its subcellular location is the cilium. In terms of biological role, small GTP-binding protein which cycles between an inactive GDP-bound and an active GTP-bound form, and the rate of cycling is regulated by guanine nucleotide exchange factors (GEF) and GTPase-activating proteins (GAP). Required for normal cytokinesis and cilia signaling. Requires assistance from GTPase-activating proteins (GAPs) like RP2 and PDE6D, in order to cycle between inactive GDP-bound and active GTP-bound forms. Required for targeting proteins to the cilium, including myristoylated NPHP3 and prenylated INPP5E. Targets NPHP3 to the ciliary membrane by releasing myristoylated NPHP3 from UNC119B cargo adapter into the cilium. Required for PKD1:PKD2 complex targeting from the trans-Golgi network to the cilium. This is ADP-ribosylation factor-like protein 3 (ARL3) from Homo sapiens (Human).